The chain runs to 391 residues: Aspartic protease 17 (391 aa).

The first 15 residues, 1–15 (MHLIFLLFLAPFCSA), serve as a signal peptide directing secretion. The 321-residue stretch at 65 to 385 (YLGNFTVGTP…DIGNARIGFA (321 aa)) folds into the Peptidase A1 domain. A glycan (N-linked (GlcNAc...) asparagine) is linked at Asn68. Asp83 is an active-site residue. N-linked (GlcNAc...) asparagine glycosylation occurs at Asn108. Asp274 is a catalytic residue. An intrachain disulfide couples Cys309 to Cys345.

This sequence belongs to the peptidase A1 family. In terms of tissue distribution, expressed in intestinal cells.

It localises to the secreted. Its function is as follows. Aspartic proteinase. The chain is Aspartic protease 17 from Caenorhabditis elegans.